The following is a 239-amino-acid chain: 4-hydroxy-tetrahydrodipicolinate reductase (239 aa).

NAD(+)-binding positions include 8 to 13 (GSTGKM), 78 to 80 (GTT), and 102 to 105 (SANM). H134 serves as the catalytic Proton donor/acceptor. H135 lines the (S)-2,3,4,5-tetrahydrodipicolinate pocket. K138 acts as the Proton donor in catalysis. A (S)-2,3,4,5-tetrahydrodipicolinate-binding site is contributed by 144–145 (GT).

This sequence belongs to the DapB family.

It localises to the cytoplasm. It catalyses the reaction (S)-2,3,4,5-tetrahydrodipicolinate + NAD(+) + H2O = (2S,4S)-4-hydroxy-2,3,4,5-tetrahydrodipicolinate + NADH + H(+). It carries out the reaction (S)-2,3,4,5-tetrahydrodipicolinate + NADP(+) + H2O = (2S,4S)-4-hydroxy-2,3,4,5-tetrahydrodipicolinate + NADPH + H(+). It functions in the pathway amino-acid biosynthesis; L-lysine biosynthesis via DAP pathway; (S)-tetrahydrodipicolinate from L-aspartate: step 4/4. Its function is as follows. Catalyzes the conversion of 4-hydroxy-tetrahydrodipicolinate (HTPA) to tetrahydrodipicolinate. The protein is 4-hydroxy-tetrahydrodipicolinate reductase of Rickettsia conorii (strain ATCC VR-613 / Malish 7).